We begin with the raw amino-acid sequence, 191 residues long: MKELEEKIKEYGTVLPGNVLKVDAFLNHQVDPQLMLHIGQKFAKLFANEGITKIWTVESSGIAPAVMTGLEMNLPVIFARKHKSLTLNQNMYTADVYSYTKKTTNRISISKKYVDADDKILMIDDFLANGQAVEGLLEIADQAGVQVAGAGIVIEKSFQPGAGELKERGIRVESLARIQSLSDNKVEFVKD.

Xanthine-binding residues include leucine 20 and asparagine 27. Position 128–132 (128–132 (ANGQA)) interacts with 5-phospho-alpha-D-ribose 1-diphosphate. Xanthine is bound at residue lysine 156.

The protein belongs to the purine/pyrimidine phosphoribosyltransferase family. Xpt subfamily. In terms of assembly, homodimer.

It localises to the cytoplasm. The enzyme catalyses XMP + diphosphate = xanthine + 5-phospho-alpha-D-ribose 1-diphosphate. It functions in the pathway purine metabolism; XMP biosynthesis via salvage pathway; XMP from xanthine: step 1/1. In terms of biological role, converts the preformed base xanthine, a product of nucleic acid breakdown, to xanthosine 5'-monophosphate (XMP), so it can be reused for RNA or DNA synthesis. The chain is Xanthine phosphoribosyltransferase from Limosilactobacillus reuteri (strain DSM 20016) (Lactobacillus reuteri).